The following is a 229-amino-acid chain: Cytochrome c oxidase subunit 2 (229 aa).

Topologically, residues Met-1 to His-26 are mitochondrial intermembrane. The chain crosses the membrane as a helical span at residues Ala-27 to Asn-48. Residues Ser-49–Glu-62 are Mitochondrial matrix-facing. Residues Met-63–Arg-82 form a helical membrane-spanning segment. The Mitochondrial intermembrane segment spans residues Leu-83 to Ser-229. Cu cation is bound by residues His-161, Cys-196, Glu-198, Cys-200, His-204, and Met-207. Residue Glu-198 participates in Mg(2+) binding.

It belongs to the cytochrome c oxidase subunit 2 family. As to quaternary structure, component of the cytochrome c oxidase (complex IV, CIV), a multisubunit enzyme composed of a catalytic core of 3 subunits and several supernumerary subunits. The complex exists as a monomer or a dimer and forms supercomplexes (SCs) in the inner mitochondrial membrane with ubiquinol-cytochrome c oxidoreductase (cytochrome b-c1 complex, complex III, CIII). The cofactor is Cu cation.

It localises to the mitochondrion inner membrane. The catalysed reaction is 4 Fe(II)-[cytochrome c] + O2 + 8 H(+)(in) = 4 Fe(III)-[cytochrome c] + 2 H2O + 4 H(+)(out). Its function is as follows. Component of the cytochrome c oxidase, the last enzyme in the mitochondrial electron transport chain which drives oxidative phosphorylation. The respiratory chain contains 3 multisubunit complexes succinate dehydrogenase (complex II, CII), ubiquinol-cytochrome c oxidoreductase (cytochrome b-c1 complex, complex III, CIII) and cytochrome c oxidase (complex IV, CIV), that cooperate to transfer electrons derived from NADH and succinate to molecular oxygen, creating an electrochemical gradient over the inner membrane that drives transmembrane transport and the ATP synthase. Cytochrome c oxidase is the component of the respiratory chain that catalyzes the reduction of oxygen to water. Electrons originating from reduced cytochrome c in the intermembrane space (IMS) are transferred via the dinuclear copper A center (CU(A)) of subunit 2 and heme A of subunit 1 to the active site in subunit 1, a binuclear center (BNC) formed by heme A3 and copper B (CU(B)). The BNC reduces molecular oxygen to 2 water molecules using 4 electrons from cytochrome c in the IMS and 4 protons from the mitochondrial matrix. This is Cytochrome c oxidase subunit 2 (mt:CoII) from Drosophila bifasciata (Fruit fly).